Consider the following 249-residue polypeptide: uncharacterized protein (249 aa).

Residues His-10, His-12, Glu-95, His-129, His-150, and Asp-198 each coordinate a divalent metal cation.

The protein belongs to the metallo-dependent hydrolases superfamily. TatD-type hydrolase family. A divalent metal cation is required as a cofactor.

This is an uncharacterized protein from Methanocaldococcus jannaschii (strain ATCC 43067 / DSM 2661 / JAL-1 / JCM 10045 / NBRC 100440) (Methanococcus jannaschii).